We begin with the raw amino-acid sequence, 303 residues long: L(+)-tartrate dehydratase subunit alpha (303 aa).

Iron-sulfur cluster is bound by residues Cys71, Cys190, and Cys277.

This sequence belongs to the class-I fumarase family. As to quaternary structure, tetramer of two alpha and two beta subunits. It depends on iron-sulfur cluster as a cofactor.

It carries out the reaction (2R,3R)-tartrate = oxaloacetate + H2O. The protein is L(+)-tartrate dehydratase subunit alpha (ttdA) of Escherichia coli O157:H7.